The sequence spans 127 residues: Glycine cleavage system H protein (127 aa).

A Lipoyl-binding domain is found at 23–104 (TALVGLTDYA…PYEAWFAKIT (82 aa)). At K64 the chain carries N6-lipoyllysine.

Belongs to the GcvH family. In terms of assembly, the glycine cleavage system is composed of four proteins: P, T, L and H. (R)-lipoate is required as a cofactor.

In terms of biological role, the glycine cleavage system catalyzes the degradation of glycine. The H protein shuttles the methylamine group of glycine from the P protein to the T protein. The protein is Glycine cleavage system H protein of Lachnoclostridium phytofermentans (strain ATCC 700394 / DSM 18823 / ISDg) (Clostridium phytofermentans).